An 876-amino-acid polypeptide reads, in one-letter code: Leucine--tRNA ligase (876 aa).

A 'HIGH' region motif is present at residues 42–52 (PYPSGKLHMGH). A 'KMSKS' region motif is present at residues 634 to 638 (KMSKS). Residue Lys637 coordinates ATP.

Belongs to the class-I aminoacyl-tRNA synthetase family.

Its subcellular location is the cytoplasm. The catalysed reaction is tRNA(Leu) + L-leucine + ATP = L-leucyl-tRNA(Leu) + AMP + diphosphate. The sequence is that of Leucine--tRNA ligase from Neisseria meningitidis serogroup C / serotype 2a (strain ATCC 700532 / DSM 15464 / FAM18).